We begin with the raw amino-acid sequence, 207 residues long: uncharacterized protein (207 aa).

It belongs to the IIV-6 350L family.

This is an uncharacterized protein from Invertebrate iridescent virus 6 (IIV-6).